Consider the following 353-residue polypeptide: Stomatin-like protein 2, mitochondrial (353 aa).

The transit peptide at 1–28 (MLARAARGTGALLLRGSVQASGRVPRRA) directs the protein to the mitochondrion. Ser-17 is modified (phosphoserine; by PKC/PRKCZ). Tyr-124 is modified (phosphotyrosine). Lys-145 carries the post-translational modification N6-acetyllysine; alternate. Lys-145 bears the N6-succinyllysine; alternate mark. Residues 215-252 (INVAEGKKQAQILASEAEKAEQINQAAGEASAVLAKAK) are a coiled coil. Position 233 is an N6-acetyllysine (Lys-233). A disordered region spans residues 324 to 353 (VPGAQNSSQSRRDVQATDTSIEELGRVKLS). Phosphoserine is present on Ser-330.

Belongs to the band 7/mec-2 family. In terms of assembly, forms homooligomers. Interacts with MFN2; may form heterooligomers. Interacts with PHB1 and PHB2; recruits them to cardiolipin-enriched mitochondrial membranes and stabilizes them. Interacts with CACNA2D2.

The protein resides in the cell membrane. The protein localises to the mitochondrion. It localises to the mitochondrion inner membrane. Its subcellular location is the mitochondrion intermembrane space. It is found in the membrane raft. The protein resides in the cytoplasm. The protein localises to the cytoskeleton. Mitochondrial protein that probably regulates the biogenesis and the activity of mitochondria. Stimulates cardiolipin biosynthesis, binds cardiolipin-enriched membranes where it recruits and stabilizes some proteins including prohibitin and may therefore act in the organization of functional microdomains in mitochondrial membranes. Through regulation of the mitochondrial function may play a role into several biological processes including cell migration, cell proliferation, T-cell activation, calcium homeostasis and cellular response to stress. May play a role in calcium homeostasis through negative regulation of calcium efflux from mitochondria. Required for mitochondrial hyperfusion a pro-survival cellular response to stress which results in increased ATP production by mitochondria. May also regulate the organization of functional domains at the plasma membrane and play a role in T-cell activation through association with the T-cell receptor signaling complex and its regulation. In Mus musculus (Mouse), this protein is Stomatin-like protein 2, mitochondrial (Stoml2).